We begin with the raw amino-acid sequence, 424 residues long: Double-stranded RNA-binding protein 8 (424 aa).

Residues 1 to 10 show a composition bias toward pro residues; it reads MDMPPTPLPP. The disordered stretch occupies residues 1-22; that stretch reads MDMPPTPLPPETANTSPAPNGA. DRBM domains lie at 33-102 and 118-185; these read VFKS…EIVK and LCKN…AIQG. Basic and acidic residues-rich tracts occupy residues 287 to 308 and 318 to 328; these read KRVE…ENQH and DEARVEQEPSR. Residues 287–330 form a disordered region; the sequence is KRVEAEPPRDIEMVQPDKENQHSDAALVQPDDEARVEQEPSRDI.

Binds double-stranded RNA. The sequence is that of Double-stranded RNA-binding protein 8 (DRB8) from Oryza sativa subsp. japonica (Rice).